Consider the following 328-residue polypeptide: uncharacterized protein (328 aa).

Residues 1–24 form the signal peptide; that stretch reads MKSIKGLGKLLLASSILFSSSAFA.

Belongs to the bacterial solute-binding protein 7 family.

It localises to the periplasm. This is an uncharacterized protein from Haemophilus influenzae (strain ATCC 51907 / DSM 11121 / KW20 / Rd).